We begin with the raw amino-acid sequence, 446 residues long: Exodeoxyribonuclease 7 large subunit (446 aa).

The protein belongs to the XseA family. As to quaternary structure, heterooligomer composed of large and small subunits.

It localises to the cytoplasm. The catalysed reaction is Exonucleolytic cleavage in either 5'- to 3'- or 3'- to 5'-direction to yield nucleoside 5'-phosphates.. Its function is as follows. Bidirectionally degrades single-stranded DNA into large acid-insoluble oligonucleotides, which are then degraded further into small acid-soluble oligonucleotides. This Streptococcus pneumoniae (strain Hungary19A-6) protein is Exodeoxyribonuclease 7 large subunit.